The chain runs to 299 residues: Tricarboxylate transport protein (299 aa).

Solcar repeat units follow at residues Val10–Met97, Thr109–Leu199, and Leu212–Met297. 6 helical membrane passes run Phe16–Ala36, Ile66–Ile86, Ile113–Ile133, Gly174–Tyr193, Gly215–Leu235, and Gly272–Tyr291.

Belongs to the mitochondrial carrier (TC 2.A.29) family.

The protein localises to the mitochondrion inner membrane. Functionally, transport of citrate across inner mitochondrial membrane. The polypeptide is Tricarboxylate transport protein (CTP1) (Saccharomyces cerevisiae (strain ATCC 204508 / S288c) (Baker's yeast)).